The following is a 121-amino-acid chain: Cysteine-rich neurotrophic factor (121 aa).

Residues M1–A18 form the signal peptide. A glycan (N-linked (GlcNAc...) asparagine) is linked at N57.

Its subcellular location is the secreted. Interacts with the p75 low-affinity neurotrophin receptor. Evokes neurite outgrowth and modulated calcium currents in pedal motor neurons. May be involved in target-derived trophic support for motor neurons. In Lymnaea stagnalis (Great pond snail), this protein is Cysteine-rich neurotrophic factor.